A 124-amino-acid polypeptide reads, in one-letter code: Small ribosomal subunit protein uS12 (124 aa).

D89 bears the 3-methylthioaspartic acid mark.

The protein belongs to the universal ribosomal protein uS12 family. In terms of assembly, part of the 30S ribosomal subunit. Contacts proteins S8 and S17. May interact with IF1 in the 30S initiation complex.

Functionally, with S4 and S5 plays an important role in translational accuracy. Its function is as follows. Interacts with and stabilizes bases of the 16S rRNA that are involved in tRNA selection in the A site and with the mRNA backbone. Located at the interface of the 30S and 50S subunits, it traverses the body of the 30S subunit contacting proteins on the other side and probably holding the rRNA structure together. The combined cluster of proteins S8, S12 and S17 appears to hold together the shoulder and platform of the 30S subunit. The sequence is that of Small ribosomal subunit protein uS12 from Tolumonas auensis (strain DSM 9187 / NBRC 110442 / TA 4).